The chain runs to 31 residues: Potassium channel toxin alpha-KTx 19.2 (31 aa).

Cystine bridges form between Cys-3–Cys-22, Cys-8–Cys-27, and Cys-12–Cys-29.

Belongs to the short scorpion toxin superfamily. Potassium channel inhibitor family. Alpha-KTx 19 subfamily. As to quaternary structure, monomer. As to expression, expressed by the venom gland.

The protein localises to the secreted. In terms of biological role, blocks voltage-gated potassium channels rKv1.1/KCNA1, rKv1.2/KCNA2, hKv1.3/KCNA3, rKv1.6/KCNA6 (IC(50)=75.9 nM) and, to a lesser extent, Shaker IR (with the inactivation domain removed). This is Potassium channel toxin alpha-KTx 19.2 from Buthus occitanus tunetanus (Common European scorpion).